Consider the following 377-residue polypeptide: Prostaglandin E synthase 2 (377 aa).

Residues 1–65 are Lumenal-facing; it reads MAAACTRTLG…LAAPVRGSGR (65 aa). Residues 66–83 traverse the membrane as a helical segment; sequence VLGCAFLLGGGFGLYQTI. One can recognise a GST N-terminal domain in the interval 105 to 182; the sequence is LKLTLYQYKT…ALKTYISSKD (78 aa). Glutathione is bound by residues valine 153 and 166–167; that span reads DS. Residues 266–377 form the GST C-terminal domain; sequence YIVREGKFGS…RMQKATQHVS (112 aa).

The protein belongs to the GST superfamily. Homodimer.

Its subcellular location is the golgi apparatus membrane. The enzyme catalyses prostaglandin H2 = prostaglandin E2. It catalyses the reaction prostaglandin H2 = (12S)-hydroxy-(5Z,8E,10E)-heptadecatrienoate + malonaldehyde. It functions in the pathway lipid metabolism; prostaglandin biosynthesis. With respect to regulation, isomerase activity is increased by sulfhydril compounds. Dithiothreitol (DTT) is most effective, followed by glutathione (GSH) and 2-mercaptoethanol. Functionally, isomerase that catalyzes the conversion of PGH2 into the more stable prostaglandin E2 (PGE2) (in vitro). The biological function and the GSH-dependent property of PTGES2 is still under debate. In vivo, PTGES2 could form a complex with GSH and heme and would not participate in PGE2 synthesis but would catalyze the degradation of prostaglandin E2 H2 (PGH2) to 12(S)-hydroxy-5(Z),8(E),10(E)-heptadecatrienoic acid (HHT) and malondialdehyde (MDA). In Danio rerio (Zebrafish), this protein is Prostaglandin E synthase 2 (ptges2).